We begin with the raw amino-acid sequence, 275 residues long: uncharacterized protein (275 aa).

It belongs to the SMP-30/CGR1 family.

This is an uncharacterized protein from Sulfolobus acidocaldarius (strain ATCC 33909 / DSM 639 / JCM 8929 / NBRC 15157 / NCIMB 11770).